Reading from the N-terminus, the 376-residue chain is tRNA-specific 2-thiouridylase MnmA (376 aa).

ATP is bound by residues 14 to 21 (GMSGGVDS) and Met-40. The tract at residues 100 to 102 (NPD) is interaction with target base in tRNA. The active-site Nucleophile is Cys-105. Cys-105 and Cys-202 are disulfide-bonded. Residue Gly-129 participates in ATP binding. An interaction with tRNA region spans residues 152–154 (KDQ). Cys-202 serves as the catalytic Cysteine persulfide intermediate. An interaction with tRNA region spans residues 315–316 (RY).

It belongs to the MnmA/TRMU family.

It localises to the cytoplasm. It catalyses the reaction S-sulfanyl-L-cysteinyl-[protein] + uridine(34) in tRNA + AH2 + ATP = 2-thiouridine(34) in tRNA + L-cysteinyl-[protein] + A + AMP + diphosphate + H(+). Catalyzes the 2-thiolation of uridine at the wobble position (U34) of tRNA, leading to the formation of s(2)U34. The protein is tRNA-specific 2-thiouridylase MnmA of Lactococcus lactis subsp. cremoris (strain MG1363).